We begin with the raw amino-acid sequence, 301 residues long: Putative MgpC-like protein MPN_093 (301 aa).

This sequence belongs to the MgpC family.

The polypeptide is Putative MgpC-like protein MPN_093 (Mycoplasma pneumoniae (strain ATCC 29342 / M129 / Subtype 1) (Mycoplasmoides pneumoniae)).